Consider the following 165-residue polypeptide: Small ribosomal subunit protein uS17m (165 aa).

This sequence belongs to the universal ribosomal protein uS17 family. In terms of assembly, component of the mitochondrial small ribosomal subunit (mt-SSU). Mature N.crassa 74S mitochondrial ribosomes consist of a small (37S) and a large (54S) subunit. The 37S small subunit contains a 16S ribosomal RNA (16S mt-rRNA) and 32 different proteins. The 54S large subunit contains a 23S rRNA (23S mt-rRNA) and 42 different proteins. uS17m interacts with the F(1)-ATPase inhibitor IF(1) dimer.

The protein localises to the mitochondrion. Functionally, component of the mitochondrial ribosome (mitoribosome), a dedicated translation machinery responsible for the synthesis of mitochondrial genome-encoded proteins, including at least some of the essential transmembrane subunits of the mitochondrial respiratory chain. The mitoribosomes are attached to the mitochondrial inner membrane and translation products are cotranslationally integrated into the membrane. This is Small ribosomal subunit protein uS17m (mrps17) from Neurospora crassa (strain ATCC 24698 / 74-OR23-1A / CBS 708.71 / DSM 1257 / FGSC 987).